Consider the following 450-residue polypeptide: Methylenetetrahydrofolate--tRNA-(uracil-5-)-methyltransferase TrmFO (450 aa).

Gly10–Gly15 provides a ligand contact to FAD.

Belongs to the MnmG family. TrmFO subfamily. Requires FAD as cofactor.

The protein resides in the cytoplasm. It carries out the reaction uridine(54) in tRNA + (6R)-5,10-methylene-5,6,7,8-tetrahydrofolate + NADH + H(+) = 5-methyluridine(54) in tRNA + (6S)-5,6,7,8-tetrahydrofolate + NAD(+). The enzyme catalyses uridine(54) in tRNA + (6R)-5,10-methylene-5,6,7,8-tetrahydrofolate + NADPH + H(+) = 5-methyluridine(54) in tRNA + (6S)-5,6,7,8-tetrahydrofolate + NADP(+). Catalyzes the folate-dependent formation of 5-methyl-uridine at position 54 (M-5-U54) in all tRNAs. The sequence is that of Methylenetetrahydrofolate--tRNA-(uracil-5-)-methyltransferase TrmFO from Anaeromyxobacter dehalogenans (strain 2CP-C).